The chain runs to 329 residues: CDP-6-deoxy-L-threo-D-glycero-4-hexulose-3-dehydrase reductase (329 aa).

The 92-residue stretch at 2 to 93 (SLNVKLHPSG…ELDVNYYPEL (92 aa)) folds into the 2Fe-2S ferredoxin-type domain. Residues Cys37, Cys42, Cys45, and Cys75 each coordinate [2Fe-2S] cluster. Residues 98–197 (KKTYPCKLDS…EGPQGTFFVR (100 aa)) form the FAD-binding FR-type domain.

In terms of assembly, monomer.

It functions in the pathway nucleotide-sugar biosynthesis; CDP-ascarylose biosynthesis. The protein operates within bacterial outer membrane biogenesis; lipopolysaccharide biosynthesis. Functionally, participates in the conversion of CDP-6-deoxy-D-glycero-L-threo-4-hexulose to 3,6-dideoxy-D-glycero-D-glycero-4-hexulose together with CDP-6-deoxy-D-glycero-L-threo-4-hexulose-3-dehydrase (E1) in two consecutive steps. The detailed mechanism of E3 is not yet resolved. This chain is CDP-6-deoxy-L-threo-D-glycero-4-hexulose-3-dehydrase reductase (ascD), found in Yersinia pseudotuberculosis serotype I (strain IP32953).